A 423-amino-acid polypeptide reads, in one-letter code: MLDTLLINIGQLLTMDQEDGLLRREAMNTLPVIENGAVGIENGVITFVGTAEEAKGLQAKEVIDCGGKMVSPGLVDPHTHLVFGGSRENEIALKLQGVPYLEILEQGGGILSTVNATKQSSKEELVQKAKFHLDRMLSFGVTTVEAKSGYGLDDETEWKQLEATAQLQKEHPIDLVSTFLGAHAVPKEYKGRSKEFLQWMLDLLPEMKEKQLAEFVDIFCETGVFSVEESKEFLLKAKELGFDVKIHADEIDPLGGAEAAAEIGAASADHLVGASDKGIEMLANSNTVATLLPGTTFYLNKESFARGRKMIDEGVAVALATDFNPGSCPTENIQLIMSIAMLKLKMTPEEVWNAVTVNSSYAINRGDVAGKIRVGRKADLVLWDAYNYAYVPYHYGVSHVNTVWKNGNIAYTRGEQSWSTATI.

Residues His-78 and His-80 each coordinate Fe(3+). His-78 and His-80 together coordinate Zn(2+). Positions 87, 150, and 183 each coordinate 4-imidazolone-5-propanoate. Tyr-150 contacts N-formimidoyl-L-glutamate. A Fe(3+)-binding site is contributed by His-247. Residue His-247 participates in Zn(2+) binding. 4-imidazolone-5-propanoate is bound at residue Glu-250. Asp-322 is a binding site for Fe(3+). Zn(2+) is bound at residue Asp-322. N-formimidoyl-L-glutamate contacts are provided by Asn-324 and Gly-326. Ser-327 is a 4-imidazolone-5-propanoate binding site.

The protein belongs to the metallo-dependent hydrolases superfamily. HutI family. Zn(2+) is required as a cofactor. The cofactor is Fe(3+).

Its subcellular location is the cytoplasm. The enzyme catalyses 4-imidazolone-5-propanoate + H2O = N-formimidoyl-L-glutamate. It participates in amino-acid degradation; L-histidine degradation into L-glutamate; N-formimidoyl-L-glutamate from L-histidine: step 3/3. Its function is as follows. Catalyzes the hydrolytic cleavage of the carbon-nitrogen bond in imidazolone-5-propanoate to yield N-formimidoyl-L-glutamate. It is the third step in the universal histidine degradation pathway. This is Imidazolonepropionase from Bacillus cereus (strain ATCC 10987 / NRS 248).